The following is a 313-amino-acid chain: MEGIKVLAKQFGKIKTPQGLAVAIALITAIAWFPDGLAGFLPSLKSNPFQAIIGAILTILGLSIIFFLHKKLRRGQKDSIIAEFGFIVLTLIFSLIVFNDFAITQFITSSLVFFSAWLHVREMEIVDYTVREVRPSNVKATVIFLSSAKYDEKFKKLMEKVEEIPTINDFFDFLEKEKMRLPWEMQLRLINEFSRSLKYVYVIGSVNSSSGSFEQIEDFKLIVNKFFPQIEVIKYREGLDFENLEKNFGVLKEIYSELKTKGLKEREIIIDTTGGQKIQSIAGALYSTAYDRFFAYVSTNSKSVKVFDVVPTE.

3 consecutive transmembrane segments (helical) span residues 19–41 (GLAV…AGFL), 51–68 (AIIG…IFFL), and 81–103 (IAEF…DFAI).

It localises to the cell membrane. This is an uncharacterized protein from Aquifex aeolicus (strain VF5).